A 75-amino-acid chain; its full sequence is Exodeoxyribonuclease 7 small subunit (75 aa).

The protein belongs to the XseB family. Heterooligomer composed of large and small subunits.

The protein localises to the cytoplasm. It catalyses the reaction Exonucleolytic cleavage in either 5'- to 3'- or 3'- to 5'-direction to yield nucleoside 5'-phosphates.. In terms of biological role, bidirectionally degrades single-stranded DNA into large acid-insoluble oligonucleotides, which are then degraded further into small acid-soluble oligonucleotides. This chain is Exodeoxyribonuclease 7 small subunit, found in Thermotoga maritima (strain ATCC 43589 / DSM 3109 / JCM 10099 / NBRC 100826 / MSB8).